A 150-amino-acid polypeptide reads, in one-letter code: UPF0756 membrane protein Dd703_1075 (150 aa).

Helical transmembrane passes span 8-28, 51-71, 81-101, and 114-134; these read LLIL…TITL, YGLS…IASG, AFLN…SWLG, and VVAG…GVPV.

Belongs to the UPF0756 family.

It localises to the cell membrane. The protein is UPF0756 membrane protein Dd703_1075 of Musicola paradisiaca (strain Ech703) (Dickeya paradisiaca).